A 196-amino-acid polypeptide reads, in one-letter code: SPRY domain-containing protein 7 (196 aa).

The residue at position 2 (alanine 2) is an N-acetylalanine. The 183-residue stretch at 2–184 (AASAWCCLRC…FSEFYHTPPP (183 aa)) folds into the B30.2/SPRY domain.

This Mus musculus (Mouse) protein is SPRY domain-containing protein 7 (Spryd7).